The sequence spans 446 residues: N-succinylarginine dihydrolase (446 aa).

Residues 19 to 28 (AGLSFGNVAS), Asn110, and 137 to 138 (HR) each bind substrate. Glu174 is an active-site residue. Arg213 contributes to the substrate binding site. His249 is an active-site residue. Substrate is bound by residues Asp251 and Asn364. The Nucleophile role is filled by Cys370.

It belongs to the succinylarginine dihydrolase family. Homodimer.

It catalyses the reaction N(2)-succinyl-L-arginine + 2 H2O + 2 H(+) = N(2)-succinyl-L-ornithine + 2 NH4(+) + CO2. Its pathway is amino-acid degradation; L-arginine degradation via AST pathway; L-glutamate and succinate from L-arginine: step 2/5. In terms of biological role, catalyzes the hydrolysis of N(2)-succinylarginine into N(2)-succinylornithine, ammonia and CO(2). This chain is N-succinylarginine dihydrolase, found in Burkholderia cenocepacia (strain ATCC BAA-245 / DSM 16553 / LMG 16656 / NCTC 13227 / J2315 / CF5610) (Burkholderia cepacia (strain J2315)).